The primary structure comprises 258 residues: Indole-3-glycerol phosphate synthase (258 aa).

This sequence belongs to the TrpC family.

It catalyses the reaction 1-(2-carboxyphenylamino)-1-deoxy-D-ribulose 5-phosphate + H(+) = (1S,2R)-1-C-(indol-3-yl)glycerol 3-phosphate + CO2 + H2O. Its pathway is amino-acid biosynthesis; L-tryptophan biosynthesis; L-tryptophan from chorismate: step 4/5. In Chlorobium phaeovibrioides (strain DSM 265 / 1930) (Prosthecochloris vibrioformis (strain DSM 265)), this protein is Indole-3-glycerol phosphate synthase.